The primary structure comprises 39 residues: Photosystem II reaction center protein L (39 aa).

The chain crosses the membrane as a helical span at residues 18–38 (SLYLGLLLIAVLGILFSSYFF).

It belongs to the PsbL family. As to quaternary structure, PSII is composed of 1 copy each of membrane proteins PsbA, PsbB, PsbC, PsbD, PsbE, PsbF, PsbH, PsbI, PsbJ, PsbK, PsbL, PsbM, PsbT, PsbX, PsbY, PsbZ, Psb30/Ycf12, peripheral proteins PsbO, CyanoQ (PsbQ), PsbU, PsbV and a large number of cofactors. It forms dimeric complexes.

Its subcellular location is the cellular thylakoid membrane. In terms of biological role, one of the components of the core complex of photosystem II (PSII). PSII is a light-driven water:plastoquinone oxidoreductase that uses light energy to abstract electrons from H(2)O, generating O(2) and a proton gradient subsequently used for ATP formation. It consists of a core antenna complex that captures photons, and an electron transfer chain that converts photonic excitation into a charge separation. This subunit is found at the monomer-monomer interface and is required for correct PSII assembly and/or dimerization. The protein is Photosystem II reaction center protein L of Picosynechococcus sp. (strain ATCC 27264 / PCC 7002 / PR-6) (Agmenellum quadruplicatum).